The chain runs to 140 residues: Nucleoside diphosphate kinase (140 aa).

ATP is bound by residues Lys-11, Phe-59, Arg-87, Thr-93, Arg-104, and Asn-114. The active-site Pros-phosphohistidine intermediate is His-117.

The protein belongs to the NDK family. In terms of assembly, homotetramer. Mg(2+) serves as cofactor.

It localises to the cytoplasm. The enzyme catalyses a 2'-deoxyribonucleoside 5'-diphosphate + ATP = a 2'-deoxyribonucleoside 5'-triphosphate + ADP. The catalysed reaction is a ribonucleoside 5'-diphosphate + ATP = a ribonucleoside 5'-triphosphate + ADP. In terms of biological role, major role in the synthesis of nucleoside triphosphates other than ATP. The ATP gamma phosphate is transferred to the NDP beta phosphate via a ping-pong mechanism, using a phosphorylated active-site intermediate. The polypeptide is Nucleoside diphosphate kinase (Erythrobacter litoralis (strain HTCC2594)).